We begin with the raw amino-acid sequence, 86 residues long: Cell division topological specificity factor (86 aa).

This sequence belongs to the MinE family.

Prevents the cell division inhibition by proteins MinC and MinD at internal division sites while permitting inhibition at polar sites. This ensures cell division at the proper site by restricting the formation of a division septum at the midpoint of the long axis of the cell. The polypeptide is Cell division topological specificity factor (Shewanella loihica (strain ATCC BAA-1088 / PV-4)).